A 202-amino-acid polypeptide reads, in one-letter code: MTYELPKLPYTYDALEPNFDKETMEIHYTKHHNTYVTKLNEAVAGHPELASKSAEELVTNLDSVPEDIRGAVRNHGGGHANHTLFWSILSPNGGGAPTGNLKAAIESEFGTFDEFKEKFNAAAAARFGSGWAWLVVNDGKLEIVSTANQDSPLSDGKTPVLGLDVWEHAYYLKFQNRRPEYIETFWNVINWDEANKRFDAAK.

Mn(2+)-binding residues include histidine 27, histidine 82, aspartate 164, and histidine 168.

This sequence belongs to the iron/manganese superoxide dismutase family. As to quaternary structure, homodimer. Requires Mn(2+) as cofactor.

The catalysed reaction is 2 superoxide + 2 H(+) = H2O2 + O2. Destroys superoxide anion radicals which are normally produced within the cells and which are toxic to biological systems. The sequence is that of Superoxide dismutase [Mn] (sodA) from Listeria monocytogenes serovar 1/2a (strain ATCC BAA-679 / EGD-e).